The following is a 319-amino-acid chain: Free fatty acid receptor 3 (319 aa).

Topologically, residues 1–15 (MGTSFFLGNYWLFFS) are extracellular. Residues 16 to 36 (VYLLVFLVGLPLNVMALVVFV) form a helical membrane-spanning segment. Over 37–43 (GKLRRRP) the chain is Cytoplasmic. The chain crosses the membrane as a helical span at residues 44 to 64 (VAVDLLLLNLTISDLLLLLFL). Residues 65-98 (PFRMVEAACGMRWLLPFIFCPLSGFLFFTTIYLT) lie on the Extracellular side of the membrane. Cysteines 84 and 165 form a disulfide. Residues 99 to 119 (SLFLTAVSIERFLSVAYPLWY) form a helical membrane-spanning segment. Residues 120–127 (KTRPRLAQ) are Cytoplasmic-facing. A helical membrane pass occupies residues 128 to 148 (AGLVSVVCWFLASAHCSVVYI). The Extracellular portion of the chain corresponds to 149-183 (TEYWGNATYSQGTNGTCYLEFREDQLAILLPVRLE). N-linked (GlcNAc...) asparagine glycosylation is found at asparagine 154 and asparagine 162. Residues 184–206 (MAVVLFMVPLCITSYCYSRLVWI) traverse the membrane as a helical segment. Over 207–218 (LSRGASRRRRKR) the chain is Cytoplasmic. The chain crosses the membrane as a helical span at residues 219–239 (IMGLLAATLLIFFVCFGPYNM). Over 240–254 (SHVVGYVSRESPSWR) the chain is Extracellular. The helical transmembrane segment at 255-275 (SYVLLLSTLNSCIDPLVFYFS) threads the bilayer. Topologically, residues 276-319 (SSKFQADFHQLLGRLLRTCVPWTQQVSLELKVKNGEEPSKECPS) are cytoplasmic.

Belongs to the G-protein coupled receptor 1 family. In terms of tissue distribution, expressed in white adipose tissue and skeletal muscle (at protein level). Abundantly expressed in sympathetic ganglia such as the superior cervical ganglion. Also expressed by intestinal endocrine cells.

It localises to the cell membrane. In terms of biological role, g protein-coupled receptor that is activated by a major product of dietary fiber digestion, the short chain fatty acids (SCFAs), and that plays a role in the regulation of whole-body energy homeostasis and in intestinal immunity. In omnivorous mammals, the short chain fatty acids acetate, propionate and butyrate are produced primarily by the gut microbiome that metabolizes dietary fibers. SCFAs serve as a source of energy but also act as signaling molecules. That G protein-coupled receptor is probably coupled to the pertussis toxin-sensitive, G(i/o)-alpha family of G proteins. Its activation results in the formation of inositol 1,4,5-trisphosphate, the mobilization of intracellular calcium, the phosphorylation of the MAPK3/ERK1 and MAPK1/ERK2 kinases and the inhibition of intracellular cAMP accumulation. Activated by SCFAs and by beta-hydroxybutyrate, a ketone body produced by the liver upon starvation, it inhibits N-type calcium channels and modulates the activity of sympathetic neurons through a signaling cascade involving the beta and gamma subunits of its coupled G protein, phospholipase C and MAP kinases. Thereby, it may regulate energy expenditure through the control of the sympathetic nervous system that controls for instance heart rate. Upon activation by SCFAs accumulating in the intestine, it may also signal to the brain via neural circuits which in turn would regulate intestinal gluconeogenesis. May also control the production of hormones involved in whole-body energy homeostasis. May for instance, regulate blood pressure through renin secretion. May also regulate secretion of the PYY peptide by enteroendocrine cells and control gut motility, intestinal transit rate, and the harvesting of energy from SCFAs produced by gut microbiota. May also indirectly regulate the production of LEP/Leptin, a hormone acting on the CNS to inhibit food intake, in response to the presence of short-chain fatty acids in the intestine. Finally, may also play a role in glucose homeostasis. Besides its role in energy homeostasis, may play a role in intestinal immunity. May mediate the activation of the inflammatory and immune response by SCFAs in the gut, regulating the rapid production of chemokines and cytokines by intestinal epithelial cells. Exhibits an SCFA-independent constitutive G protein-coupled receptor activity. This Mus musculus (Mouse) protein is Free fatty acid receptor 3 (Ffar3).